We begin with the raw amino-acid sequence, 873 residues long: Nitrate reductase [NADPH] (873 aa).

A disordered region spans residues 30–61 (TELDTADIPLPPPSKEPTEVLSLDKTTPDSHV). A Mo-molybdopterin-binding site is contributed by Cys150. The Cytochrome b5 heme-binding domain occupies 512–587 (TRIIDLEEFK…MPDYHIGTLD (76 aa)). Residues His547 and His570 each contribute to the heme site. The 114-residue stretch at 616–729 (KAWTKATLTK…KGPTGRFEYL (114 aa)) folds into the FAD-binding FR-type domain. FAD is bound by residues 672–675 (RSYT), 689–693 (LIKIY), 703–705 (KMT), and Thr756. Residue 843–852 (MVLVCGPEAM) participates in NADP(+) binding.

This sequence belongs to the nitrate reductase family. As to quaternary structure, homodimer. Requires FAD as cofactor. Heme serves as cofactor. The cofactor is Mo-molybdopterin.

It carries out the reaction nitrite + NADP(+) + H2O = nitrate + NADPH + H(+). Its function is as follows. Nitrate reductase is a key enzyme involved in the first step of nitrate assimilation in plants, fungi and bacteria. The protein is Nitrate reductase [NADPH] (niaD) of Emericella nidulans (strain FGSC A4 / ATCC 38163 / CBS 112.46 / NRRL 194 / M139) (Aspergillus nidulans).